We begin with the raw amino-acid sequence, 155 residues long: MRCPYCQNADTRVVDSRLIGEGEQVRRRRQCPSCGERFTTHEAPELVYPRVVKSDGRREAFDEDKLRLGFRRALEKRPVATEAVEAAVRRVCKRVSGAGEREVAANVIGEYVMEELRELDVVAYVRFASVYRRFEDVGAFREVIEGLEQHRRDDD.

A zinc finger spans residues 3-34; the sequence is CPYCQNADTRVVDSRLIGEGEQVRRRRQCPSC. In terms of domain architecture, ATP-cone spans 49–139; that stretch reads PRVVKSDGRR…VYRRFEDVGA (91 aa).

The protein belongs to the NrdR family. It depends on Zn(2+) as a cofactor.

Negatively regulates transcription of bacterial ribonucleotide reductase nrd genes and operons by binding to NrdR-boxes. The polypeptide is Transcriptional repressor NrdR (Halorhodospira halophila (strain DSM 244 / SL1) (Ectothiorhodospira halophila (strain DSM 244 / SL1))).